We begin with the raw amino-acid sequence, 243 residues long: Glutathione S-transferase omega-2 (243 aa).

One can recognise a GST N-terminal domain in the interval 22-101; sequence GLIRIYSMRF…YLDDAYPGRK (80 aa). The active-site Nucleophile is Cys-32. Glutathione is bound by residues Lys-59, Ile-72, and 85–86; that span reads ES. The region spanning 106 to 231 is the GST C-terminal domain; the sequence is DPYERARQKM…IFQGFLNLYF (126 aa).

Belongs to the GST superfamily. Omega family. As to expression, expressed in a range of tissues, including the liver, kidney, skeletal muscle and prostate. Strongest expression in the testis.

The catalysed reaction is RX + glutathione = an S-substituted glutathione + a halide anion + H(+). The enzyme catalyses L-dehydroascorbate + 2 glutathione = glutathione disulfide + L-ascorbate. It carries out the reaction methylarsonate + 2 glutathione + H(+) = methylarsonous acid + glutathione disulfide + H2O. In terms of biological role, exhibits glutathione-dependent thiol transferase activity. Has high dehydroascorbate reductase activity and may contribute to the recycling of ascorbic acid. Participates in the biotransformation of inorganic arsenic and reduces monomethylarsonic acid (MMA). This chain is Glutathione S-transferase omega-2 (GSTO2), found in Homo sapiens (Human).